The following is a 412-amino-acid chain: BSD domain-containing protein 1 (412 aa).

Residues 146-198 form the BSD domain; that stretch reads WLAYWDPEHRKAEISELLVTSPSIRALYTKMVPAAVSHSEFWQRYFYKVHQLE. Basic and acidic residues-rich tracts occupy residues 208–219 and 255–271; these read KQRADQSVHSEE and HVED…RDHT. Disordered stretches follow at residues 208–228 and 255–383; these read KQRA…EEED and HVED…EKDF. A compositionally biased stretch (low complexity) spans 272–287; sequence SITSPSESSESISPIT. The segment covering 340–351 has biased composition (basic and acidic residues); that stretch reads THREDPPSDLRV. Polar residues predominate over residues 355-374; the sequence is NSDSGKSTPSNNGQKGSSTD.

The sequence is that of BSD domain-containing protein 1 (bsdc1) from Xenopus tropicalis (Western clawed frog).